Here is a 271-residue protein sequence, read N- to C-terminus: Glutamate 5-kinase (271 aa).

Lys-14 is a binding site for ATP. Positions 54, 141, and 157 each coordinate substrate. ATP contacts are provided by residues 177 to 178 and 219 to 225; these read SD and TGGMSSK.

It belongs to the glutamate 5-kinase family.

Its subcellular location is the cytoplasm. It carries out the reaction L-glutamate + ATP = L-glutamyl 5-phosphate + ADP. Its pathway is amino-acid biosynthesis; L-proline biosynthesis; L-glutamate 5-semialdehyde from L-glutamate: step 1/2. Functionally, catalyzes the transfer of a phosphate group to glutamate to form L-glutamate 5-phosphate. In Enterococcus faecalis (strain ATCC 700802 / V583), this protein is Glutamate 5-kinase.